The sequence spans 1606 residues: E3 ubiquitin-protein ligase HECW1 (1606 aa).

Residues 182–318 form the C2 domain; sequence SAAPIFKSIG…LERHAIGDRV (137 aa). Disordered regions lie at residues 349-418, 459-538, 566-672, and 730-815; these read DDEE…PAEE, AEQL…CSLP, LLHS…SCEG, and STVF…SQLP. The span at 354 to 373 shows a compositional bias: polar residues; the sequence is SLSTEPESAQIQDSPMNNLM. Basic and acidic residues predominate over residues 380 to 392; sequence PRSEAPESSESWK. Acidic residues-rich tracts occupy residues 500-511 and 579-588; these read EEEEKEQEEEGD and AEEEDGAEEE. A compositionally biased stretch (basic and acidic residues) spans 589 to 600; that stretch reads STLKDSSEKDGL. Acidic residues predominate over residues 612 to 621; sequence ALEEDREEPE. Polar residues-rich tracts occupy residues 651–663, 751–765, and 806–815; these read HPSTGSESDSSPR, DSMQSPELDPESTNG, and HNSQPVSQLP. Residues 829–862 form the WW 1 domain; that stretch reads EPLPPNWEARIDSHGRVFYVDHVNRTTTWQRPTA. The stretch at 870 to 901 forms a coiled coil; that stretch reads RRSGSIQQMEQLNRRYQNIQRTIATERSEEDS. Phosphoserine occurs at positions 874, 937, and 939. A disordered region spans residues 894–938; it reads TERSEEDSGSQSCEQAPAGGGGGGGSDSEAESSQSSLDLRREGSL. Residues 1018–1051 enclose the WW 2 domain; it reads LELPRGWEIKTDQQGKSFFVDHNSRATTFIDPRI. Positions 1271–1606 constitute an HECT domain; that stretch reads SRKELQRNKL…VEETSTFGLE (336 aa). The active-site Glycyl thioester intermediate is Cys1574.

In terms of assembly, interacts with DVL1 and SSR3. Also interacts with mutant SOD1. Predominantly expressed in neurons of adult and fetal brain. Weakly expressed in the kidney.

The protein resides in the cytoplasm. The enzyme catalyses S-ubiquitinyl-[E2 ubiquitin-conjugating enzyme]-L-cysteine + [acceptor protein]-L-lysine = [E2 ubiquitin-conjugating enzyme]-L-cysteine + N(6)-ubiquitinyl-[acceptor protein]-L-lysine.. Its pathway is protein modification; protein ubiquitination. Functionally, E3 ubiquitin-protein ligase that mediates ubiquitination and subsequent degradation of DVL1. Also targets the mutant SOD1 protein involved in familial amyotrophic lateral sclerosis (FALS). Forms cytotoxic aggregates with DVL1, SSR3 and mutant SOD1 that lead to motor neuron death in FALS. The protein is E3 ubiquitin-protein ligase HECW1 (HECW1) of Homo sapiens (Human).